A 384-amino-acid polypeptide reads, in one-letter code: Histidinol-phosphate aminotransferase 1 (384 aa).

An N6-(pyridoxal phosphate)lysine modification is found at K233.

Belongs to the class-II pyridoxal-phosphate-dependent aminotransferase family. Histidinol-phosphate aminotransferase subfamily. Homodimer. Requires pyridoxal 5'-phosphate as cofactor.

It catalyses the reaction L-histidinol phosphate + 2-oxoglutarate = 3-(imidazol-4-yl)-2-oxopropyl phosphate + L-glutamate. The protein operates within amino-acid biosynthesis; L-histidine biosynthesis; L-histidine from 5-phospho-alpha-D-ribose 1-diphosphate: step 7/9. The polypeptide is Histidinol-phosphate aminotransferase 1 (Thiobacillus denitrificans (strain ATCC 25259 / T1)).